A 95-amino-acid polypeptide reads, in one-letter code: Aspartyl/glutamyl-tRNA(Asn/Gln) amidotransferase subunit C (95 aa).

It belongs to the GatC family. Heterotrimer of A, B and C subunits.

The catalysed reaction is L-glutamyl-tRNA(Gln) + L-glutamine + ATP + H2O = L-glutaminyl-tRNA(Gln) + L-glutamate + ADP + phosphate + H(+). The enzyme catalyses L-aspartyl-tRNA(Asn) + L-glutamine + ATP + H2O = L-asparaginyl-tRNA(Asn) + L-glutamate + ADP + phosphate + 2 H(+). Its function is as follows. Allows the formation of correctly charged Asn-tRNA(Asn) or Gln-tRNA(Gln) through the transamidation of misacylated Asp-tRNA(Asn) or Glu-tRNA(Gln) in organisms which lack either or both of asparaginyl-tRNA or glutaminyl-tRNA synthetases. The reaction takes place in the presence of glutamine and ATP through an activated phospho-Asp-tRNA(Asn) or phospho-Glu-tRNA(Gln). The sequence is that of Aspartyl/glutamyl-tRNA(Asn/Gln) amidotransferase subunit C from Azotobacter vinelandii (strain DJ / ATCC BAA-1303).